The sequence spans 239 residues: Ribosomal RNA large subunit methyltransferase E (239 aa).

Glycine 81, tryptophan 83, aspartate 104, aspartate 120, and aspartate 144 together coordinate S-adenosyl-L-methionine. The Proton acceptor role is filled by lysine 184.

The protein belongs to the class I-like SAM-binding methyltransferase superfamily. RNA methyltransferase RlmE family.

It is found in the cytoplasm. It carries out the reaction uridine(2552) in 23S rRNA + S-adenosyl-L-methionine = 2'-O-methyluridine(2552) in 23S rRNA + S-adenosyl-L-homocysteine + H(+). Its function is as follows. Specifically methylates the uridine in position 2552 of 23S rRNA at the 2'-O position of the ribose in the fully assembled 50S ribosomal subunit. The protein is Ribosomal RNA large subunit methyltransferase E of Rhizobium rhizogenes (strain K84 / ATCC BAA-868) (Agrobacterium radiobacter).